The primary structure comprises 325 residues: 6-hydroxymellein 5-farnesyltransferase cdmH (325 aa).

5 consecutive transmembrane segments (helical) span residues 60 to 80 (ASIL…GAAG), 113 to 133 (AFTW…AMLG), 138 to 158 (WPFM…KRPI), 169 to 189 (LLGI…YGPC), and 192 to 212 (ISEI…WSFY). Asn214 carries an N-linked (GlcNAc...) asparagine glycan. 3 consecutive transmembrane segments (helical) span residues 243 to 263 (ALLA…LRPF), 267 to 287 (WLWL…LLSF), and 295 to 315 (GGVL…ACTL).

It belongs to the UbiA prenyltransferase family. The cofactor is Mg(2+).

The protein resides in the membrane. It catalyses the reaction 6-hydroxymellein + (2E,6E)-farnesyl diphosphate = verruculide C + diphosphate. It functions in the pathway secondary metabolite biosynthesis; terpenoid biosynthesis. 6-hydroxymellein 5-farnesyltransferase; part of the gene cluster that mediates the biosynthesis of chrodrimanin B, a meroterpenoid that acts as a potent blocker of insect GABA-gated chloride channels. The first step of the pathway is the biosynthesis of 6-hydroxymellein by the polyketide synthase cdmE. The prenyltransferase cdmH acts as a 6-hydroxymellein 5-farnesyltransferase and produces the hydrophobic metabolite verruculide C. The FAD-dependent monooxygenase cdmI further converts verruculide C into verruculide B. The terpene cyclase cdmG then produced the pentacyclic molecule 3-hydroxypentacecilide A, the backbone structure of chrodrimanin B, via folding the farnesyl moiety of the substrate into the chair-boat conformation. The short-chain dehydrogenase/reductase cdmF functions as the 3-OH dehydrogenase that oxidizes the C-3 hydroxyl group of 3-hydroxypentacecilide A and produces chrodrimanin C, the dehydrogenated product of 3-hydroxypentacecilide A. The cytochrome P450 monooxygenase cdmJ then accepts both 3-hydroxypentacecilide A and chrodrimanin C and functions as a C-7-beta-hydroxylase to produce respectively chrodrimanin H and chrodrimanin F. The dioxygenase cdmA accepts chrodrimanin H to afford chrodrimanin E, which is further transformed to chrodrimanin A by the dioxygenase cdmD. CdmA can also accept chrodrimanin C as substrate to convert it into verruculide A, which is further converted into chrodrimanin T by cdmD. The last step of the biosynthesis is proposed to be performed by the acetyltransferase cdmC which acetylates chrodrimanin A to yield chrodrimanin B. The pathway may also lead to the production of additional shunt products, including chrodrimanins T and U. This chain is 6-hydroxymellein 5-farnesyltransferase cdmH, found in Talaromyces verruculosus (Penicillium verruculosum).